The sequence spans 305 residues: tRNA pseudouridine synthase B (305 aa).

The active-site Nucleophile is Asp-39.

Belongs to the pseudouridine synthase TruB family. Type 1 subfamily.

It carries out the reaction uridine(55) in tRNA = pseudouridine(55) in tRNA. In terms of biological role, responsible for synthesis of pseudouridine from uracil-55 in the psi GC loop of transfer RNAs. In Staphylococcus aureus (strain Mu50 / ATCC 700699), this protein is tRNA pseudouridine synthase B.